We begin with the raw amino-acid sequence, 810 residues long: Interleukin-4 receptor subunit alpha (810 aa).

Residues 1 to 25 (MGRLCTKFLTSVGCLILLLVTGSGS) form the signal peptide. Residues 26-233 (IKVLGEPTCF…NHFQLPLIQR (208 aa)) are Extracellular-facing. A disulfide bridge links Cys-34 with Cys-44. A glycan (N-linked (GlcNAc...) asparagine) is linked at Asn-72. Cys-75 and Cys-87 are joined by a disulfide. A Fibronectin type-III domain is found at 126–224 (APDNLTLHTN…EWSPSITWYN (99 aa)). N-linked (GlcNAc...) asparagine glycans are attached at residues Asn-129, Asn-135, and Asn-163. Ser-165 carries the phosphoserine modification. Positions 213–217 (WSEWS) match the WSXWS motif motif. Residues 234 to 257 (LPLGVTISCLCIPLFCLFCYFSIT) form a helical membrane-spanning segment. Residues 258–810 (KIKKIWWDQI…PVGALGIAVS (553 aa)) are Cytoplasmic-facing. The Box 1 motif signature appears at 263-271 (WWDQIPTPA). Residues 441–557 (GSGQASVSWA…ESWEQILHMS (117 aa)) are required for IRS1 activation and IL4-induced cell growth. Residues 460–482 (ATCQVTEQPSHPGPLSGSPAQSA) form a disordered region. Position 500 is a phosphotyrosine (Tyr-500). The disordered stretch occupies residues 510–546 (APNPGELAPEQQQADHLEEEEPPSPADPHSSGPPMQP). The interval 557–653 (SVLQHGAAAG…SSVPLFTFGL (97 aa)) is required for IL4-induced gene expression. Phosphotyrosine is present on residues Tyr-575, Tyr-603, and Tyr-631. The segment at 586-672 (AAQDPGVPGV…NSDPPKSPPE (87 aa)) is disordered. Over residues 635–647 (QNPVPNQSPSSVP) the composition is skewed to low complexity. An ITIM motif motif is present at residues 707–712 (IVYSSL). The segment at 766-810 (PPEANLMSAPKTPSNLSGEGKGPGHSPVPSQTTEVPVGALGIAVS) is disordered.

Belongs to the type I cytokine receptor family. Type 4 subfamily. The functional IL4 receptor is formed by initial binding of IL4 to IL4R. Subsequent recruitment to the complex of the common gamma chain, in immune cells, creates a type I receptor and, in non-immune cells, of IL13RA1 forms a type II receptor. IL4R can also interact with the IL13/IL13RA1 complex to form a similar type II receptor. Interacts with the SH2-containing phosphatases, PTPN6/SHIP1, PTPN11/SHIP2 and INPP5D/SHIP. Interacts with JAK3. Interacts with PIK3C3. Interacts with JAK1 through a Box 1-containing region; inhibited by SOCS5. Interacts with SOCS5; inhibits IL4 signaling. Interacts with CLM1. Interacts with IL13RA2. Post-translationally, on IL4 binding, phosphorylated on C-terminal tyrosine residues. Soluble IL4R can also be produced by proteolytic cleavage at the cell surface (shedding). As to expression, expressed in both Th1 and Th2 cells.

It localises to the cell membrane. Its subcellular location is the secreted. Receptor for both interleukin 4 and interleukin 13. Couples to the JAK1/2/3-STAT6 pathway. The IL4 response is involved in promoting Th2 differentiation. The IL4/IL13 responses are involved in regulating IgE production and, chemokine and mucus production at sites of allergic inflammation. In certain cell types, can signal through activation of insulin receptor substrates, IRS1/IRS2. The polypeptide is Interleukin-4 receptor subunit alpha (Il4r) (Mus musculus (Mouse)).